The primary structure comprises 68 residues: UPF0337 protein RB10934 (68 aa).

This sequence belongs to the UPF0337 (CsbD) family.

The sequence is that of UPF0337 protein RB10934 from Rhodopirellula baltica (strain DSM 10527 / NCIMB 13988 / SH1).